A 252-amino-acid chain; its full sequence is Reaction center protein L chain (252 aa).

The next 3 membrane-spanning stretches (helical) occupy residues 8–30, 58–86, and 91–113; these read FFGV…GAAL, GGLW…SRKL, and HVPA…RPLL. (7R,8Z)-bacteriochlorophyll b is bound by residues histidine 128 and histidine 148. Residues 146-173 traverse the membrane as a helical segment; it reads PMHMVAVTLFFTTTLALALHGSLVLAAI. A Fe cation-binding site is contributed by histidine 165. Phenylalanine 191 contributes to the a ubiquinone binding site. The helical transmembrane segment at 200-225 threads the bilayer; it reads GTLGIHRLGLFLALGAGFASATCILL. Residue histidine 205 participates in Fe cation binding.

It belongs to the reaction center PufL/M/PsbA/D family. In terms of assembly, reaction center is composed of four bacteriochlorophylls, two bacteriopheophytins, two ubiquinones, one iron, and two highly hydrophobic polypeptide chains (designated L and M).

Its subcellular location is the cell inner membrane. In terms of biological role, the reaction center is a membrane-bound complex that mediates the initial photochemical event in the electron transfer process of photosynthesis. The sequence is that of Reaction center protein L chain (pufL) from Acidiphilium cryptum.